Reading from the N-terminus, the 174-residue chain is ATP-dependent protease subunit HslV (174 aa).

Thr-2 is a catalytic residue. 3 residues coordinate Na(+): Gly-157, Cys-160, and Thr-163.

It belongs to the peptidase T1B family. HslV subfamily. In terms of assembly, a double ring-shaped homohexamer of HslV is capped on each side by a ring-shaped HslU homohexamer. The assembly of the HslU/HslV complex is dependent on binding of ATP.

The protein resides in the cytoplasm. It catalyses the reaction ATP-dependent cleavage of peptide bonds with broad specificity.. Allosterically activated by HslU binding. In terms of biological role, protease subunit of a proteasome-like degradation complex believed to be a general protein degrading machinery. In Shewanella pealeana (strain ATCC 700345 / ANG-SQ1), this protein is ATP-dependent protease subunit HslV.